We begin with the raw amino-acid sequence, 465 residues long: NADH-quinone oxidoreductase subunit N (465 aa).

The next 13 membrane-spanning stretches (helical) occupy residues 9-29, 44-64, 73-93, 110-130, 159-179, 198-218, 235-255, 265-285, 292-312, 327-347, 371-391, 405-427, and 444-464; these read FNFV…VLLL, ASII…GFVL, LFVS…FSML, FLFM…IVIF, YFTL…FVYL, PILL…LSIA, FIAF…LRIF, EYIV…VALI, MLAY…VSSM, IFAL…IFLI, IMLA…IFWG, YALV…KILI, and VKQK…VFLL.

The protein belongs to the complex I subunit 2 family. As to quaternary structure, NDH-1 is composed of 14 different subunits. Subunits NuoA, H, J, K, L, M, N constitute the membrane sector of the complex.

It localises to the cell inner membrane. The catalysed reaction is a quinone + NADH + 5 H(+)(in) = a quinol + NAD(+) + 4 H(+)(out). Its function is as follows. NDH-1 shuttles electrons from NADH, via FMN and iron-sulfur (Fe-S) centers, to quinones in the respiratory chain. The immediate electron acceptor for the enzyme in this species is believed to be ubiquinone. Couples the redox reaction to proton translocation (for every two electrons transferred, four hydrogen ions are translocated across the cytoplasmic membrane), and thus conserves the redox energy in a proton gradient. The protein is NADH-quinone oxidoreductase subunit N of Campylobacter lari (strain RM2100 / D67 / ATCC BAA-1060).